Consider the following 274-residue polypeptide: Large ribosomal subunit protein uL2 (274 aa).

Positions 223-274 (VVMNPVDHPHGGGEGRTSGGRHPVSPWGVPTKGFKTRKNKRTDKYIVRRRTK) are disordered. Over residues 256–274 (FKTRKNKRTDKYIVRRRTK) the composition is skewed to basic residues.

It belongs to the universal ribosomal protein uL2 family. As to quaternary structure, part of the 50S ribosomal subunit. Forms a bridge to the 30S subunit in the 70S ribosome.

In terms of biological role, one of the primary rRNA binding proteins. Required for association of the 30S and 50S subunits to form the 70S ribosome, for tRNA binding and peptide bond formation. It has been suggested to have peptidyltransferase activity; this is somewhat controversial. Makes several contacts with the 16S rRNA in the 70S ribosome. This Vibrio atlanticus (strain LGP32) (Vibrio splendidus (strain Mel32)) protein is Large ribosomal subunit protein uL2.